The chain runs to 47 residues: GAACFCDSDGPSVSGNTLSGILWLAGCPSGWHNCKAHGPNIGWCCKK.

Disulfide bonds link Cys-4-Cys-44, Cys-6-Cys-34, and Cys-27-Cys-45.

Belongs to the sea anemone sodium channel inhibitory toxin family. Type I subfamily.

It is found in the secreted. The protein resides in the nematocyst. Its function is as follows. Binds specifically to voltage-gated sodium channels (Nav), thereby delaying their inactivation during signal transduction. Thus it strongly stimulates mammalian cardiac muscle contraction. This Anthopleura xanthogrammica (Giant green sea anemone) protein is Delta-actitoxin-Axm1d.